We begin with the raw amino-acid sequence, 383 residues long: Na(+)/H(+) antiporter NhaA (383 aa).

11 consecutive transmembrane segments (helical) span residues 10-30, 56-76, 91-111, 121-141, 150-170, 174-194, 206-226, 254-274, 289-308, 327-347, and 355-375; these read LIGGLILFSAALLAIVVNNSP, LMHWINDGLMAIYFLYIGLEI, IITPAIAAFAGLAMPSLIYLS, GWAIPSATDIAFTLGILALLG, LLVITIAIFDDIAAIAIIAIF, SLSLLSLSLGTLFILAMIICN, VVLGFFAWFCTIKSGVHATLA, PWIIYFILPVFAFANAGISFS, IIWGLFVGKQLGIFSILAVF, GISLLCGIGFTMSLFIGVLAF, and AIKIGVVVGSVLSGFFGYIVL.

This sequence belongs to the NhaA Na(+)/H(+) (TC 2.A.33) antiporter family.

The protein resides in the cell inner membrane. It catalyses the reaction Na(+)(in) + 2 H(+)(out) = Na(+)(out) + 2 H(+)(in). Its function is as follows. Na(+)/H(+) antiporter that extrudes sodium in exchange for external protons. The chain is Na(+)/H(+) antiporter NhaA from Francisella tularensis subsp. holarctica (strain FTNF002-00 / FTA).